A 659-amino-acid chain; its full sequence is MEEIKKRIIFLIDKINKTNYEYYTLNESSLNDQQYDALFRELLYLESKYPEYNYKFSPTTKIGGPISSKFHKFLHEKSMLSLNNVFNIKELKLFYDRISKKISNFTLLTELKIDGLAVSLKYKKGILDKAITRGDGYQGELITDNVKTIKELPLKLKEPLDLEVRGEVYMSYESFNYLNQIRKKENKSLFANPRNAASGTLRQLDSKVAAERNLSIFLYTIVNPPKFIITQKSILEFLTYLQFPVNNYYEYVLNWDQLIKKISYYEEIKNHLGYNTDGIVIKINELSFHSIIGYTSKAPKWAIAYKFKVFKTETLINNILFQIGRTGIVTPIAELLPTIVDGSVISKVNLHNFDYIKQKDIRVNDFVLVHKSGSIIPEIIEVIKTKRKNQIPFEMITHCYSCNTKLIKKDSNHFCFNLDCEEKKIQELFYFVSKSAMDINVLGLQTLKILFYKGFINNISDLYSLNQYKKEVEELHGFGKKKFNNIIISLEKSKNKCLSNFLIGLGIKNVGIHLAKILAQKFENIDNLQKASIESLLKIDEIGIKSAQNIKNFFLNSKNLKLIEKFKNLGLNLFYFKSKNNIKNNIFKNKKVIFTGILEKYSRNQAQNIVIELGGVIINSITNKTNYLILGKNPGSKLLKAKKFNIKVLQEHEFEELIK.

NAD(+) contacts are provided by residues 32–36 (DQQYD), 81–82 (SL), and Glu-110. The active-site N6-AMP-lysine intermediate is Lys-112. Positions 133, 167, 282, and 306 each coordinate NAD(+). 4 residues coordinate Zn(2+): Cys-399, Cys-402, Cys-415, and Cys-420. Residues 582–659 (IKNNIFKNKK…QEHEFEELIK (78 aa)) form the BRCT domain.

This sequence belongs to the NAD-dependent DNA ligase family. LigA subfamily. Mg(2+) serves as cofactor. The cofactor is Mn(2+).

The catalysed reaction is NAD(+) + (deoxyribonucleotide)n-3'-hydroxyl + 5'-phospho-(deoxyribonucleotide)m = (deoxyribonucleotide)n+m + AMP + beta-nicotinamide D-nucleotide.. DNA ligase that catalyzes the formation of phosphodiester linkages between 5'-phosphoryl and 3'-hydroxyl groups in double-stranded DNA using NAD as a coenzyme and as the energy source for the reaction. It is essential for DNA replication and repair of damaged DNA. The protein is DNA ligase of Phytoplasma mali (strain AT).